Consider the following 213-residue polypeptide: MKILLLILIAYLLGSIQTGLWIGKVFFHTNLREHGSGNTGTTNTFRVLGKTAGTITFLVDMLKGTLAVLLPIWLGITEVSPLIIGFFAIIGHVFPFFTGFKGGKAVATSAGVLLGFVPLYFVFLLLVFALTLYLTSMISFSSITAAVVGLITLATFPAIHFLLDGYDPIFSAVLIIIVLVIIFRHTENIARIRNHRENLVPFGLNLTKQNPKK.

6 consecutive transmembrane segments (helical) span residues 3-23 (ILLL…LWIG), 54-76 (TITF…WLGI), 83-100 (IIGF…FTGF), 110-130 (AGVL…VFAL), 142-162 (SITA…IHFL), and 163-183 (LDGY…VIIF).

The protein belongs to the PlsY family. As to quaternary structure, probably interacts with PlsX.

Its subcellular location is the cell membrane. The enzyme catalyses an acyl phosphate + sn-glycerol 3-phosphate = a 1-acyl-sn-glycero-3-phosphate + phosphate. It functions in the pathway lipid metabolism; phospholipid metabolism. Functionally, catalyzes the transfer of an acyl group from acyl-phosphate (acyl-PO(4)) to glycerol-3-phosphate (G3P) to form lysophosphatidic acid (LPA). This enzyme utilizes acyl-phosphate as fatty acyl donor, but not acyl-CoA or acyl-ACP. This Streptococcus thermophilus (strain ATCC BAA-491 / LMD-9) protein is Glycerol-3-phosphate acyltransferase.